The primary structure comprises 37 residues: MKVKPSVKKICDKCKVIRRHGRVMVICQNLRHKQRQG.

This sequence belongs to the bacterial ribosomal protein bL36 family.

The sequence is that of Large ribosomal subunit protein bL36 from Acidothermus cellulolyticus (strain ATCC 43068 / DSM 8971 / 11B).